A 634-amino-acid chain; its full sequence is Dynein axonemal assembly factor 1 (634 aa).

Positions 1-80 (MHPEVSEPPV…SRDDREDRGP (80 aa)) are disordered. Residues 22 to 42 (AGDHGDAGPGIRKEEISETKE) show a composition bias toward basic and acidic residues. Residues 48–62 (CTTSCPSQQQPSGDN) are compositionally biased toward polar residues. Over residues 70–80 (HSRDDREDRGP) the composition is skewed to basic and acidic residues. 6 LRR repeats span residues 101-123 (ALNDTLYLHFKGFDRIENLEEYT), 124-145 (GLRCLWLECNGIQRIENLQAQS), 146-167 (ELRCLFLQVNLLHKIENLEPLQ), 168-189 (KLDALNLSNNYIKTIENLSCLP), 190-211 (VLNTLQMAHNRLETVADIEHLR), and 215-236 (RLCVLDLSHNALSDPEILSVLE). One can recognise an LRRCT domain in the interval 249–288 (NPVTKHIPNYRRTVTVRLKHLTYLDDRPVFPKDRACAEAW). The span at 326-336 (EERKKARDRGE) shows a compositional bias: basic and acidic residues. Residues 326–358 (EERKKARDRGETPLPDSEGSIPTSPEAEEKQPM) form a disordered region. Ser-349 carries the phosphoserine modification. Thr-462 bears the Phosphothreonine mark. A phosphoserine mark is found at Ser-465 and Ser-488. Disordered regions lie at residues 481–505 (ISSLSDDSDPELDELSLSTSEATPT) and 559–634 (ELND…FGLD).

It belongs to the DNAAF1 family.

Its subcellular location is the cell projection. The protein resides in the cilium. Its function is as follows. Cilium-specific protein required for the stability of the ciliary architecture. Plays a role in cytoplasmic preassembly of dynein arms. Involved in regulation of microtubule-based cilia and actin-based brush border microvilli. The protein is Dynein axonemal assembly factor 1 (Dnaaf1) of Mus musculus (Mouse).